The following is a 198-amino-acid chain: MDAILNYKSEDTEDYYTLLGCDELSSVEQILAEFKVRALECHPDKHPENSKAVETFQKLQKAKDILTNEASRARYDHWRRSQMSMSFQQWEALSDSVKMSMHWAVRGKKDLMLEESDQTPTDKIENEEQDEQKEIKKEEFGSTTEKMEQKESKSVEKSFSPQNPDSPGFANVNCWHLRFRWSGDAPSELLRKFRNYEI.

N-acetylmethionine is present on Met-1. A J domain is found at 14–79 (DYYTLLGCDE…ASRARYDHWR (66 aa)). Positions 112–167 (MLEESDQTPTDKIENEEQDEQKEIKKEEFGSTTEKMEQKESKSVEKSFSPQNPDSP) are disordered. A compositionally biased stretch (basic and acidic residues) spans 120 to 156 (PTDKIENEEQDEQKEIKKEEFGSTTEKMEQKESKSVE). 3 positions are modified to phosphoserine: Ser-160, Ser-166, and Ser-182.

As to quaternary structure, interacts with HSPA8. Interacts with TPH1. Interacts with TPH2.

The protein resides in the cytoplasm. In terms of biological role, probable co-chaperone that participates in the proper folding of biopterin-dependent aromatic amino acid hydroxylases, which include phenylalanine-4-hydroxylase (PAH), tyrosine 3-monooxygenase (TH) and peripheral and neuronal tryptophan hydroxylases (TPH1 and TPH2). The sequence is that of DnaJ homolog subfamily C member 12 (DNAJC12) from Bos taurus (Bovine).